Here is a 391-residue protein sequence, read N- to C-terminus: UPF0229 protein CLH_2838 (391 aa).

Disordered stretches follow at residues 1–23 (MAIF…DKRR) and 75–107 (VATG…GNEE). Basic and acidic residues predominate over residues 80–92 (GEEKRGDKIESGS).

This sequence belongs to the UPF0229 family.

In Clostridium botulinum (strain Alaska E43 / Type E3), this protein is UPF0229 protein CLH_2838.